Consider the following 309-residue polypeptide: Homoserine kinase (309 aa).

91–101 provides a ligand contact to ATP; the sequence is PIGSGLGSSAC.

This sequence belongs to the GHMP kinase family. Homoserine kinase subfamily.

Its subcellular location is the cytoplasm. The enzyme catalyses L-homoserine + ATP = O-phospho-L-homoserine + ADP + H(+). It functions in the pathway amino-acid biosynthesis; L-threonine biosynthesis; L-threonine from L-aspartate: step 4/5. In terms of biological role, catalyzes the ATP-dependent phosphorylation of L-homoserine to L-homoserine phosphate. This is Homoserine kinase from Pectobacterium carotovorum subsp. carotovorum (strain PC1).